The chain runs to 274 residues: Bis(5'-nucleosyl)-tetraphosphatase, symmetrical (274 aa).

Belongs to the Ap4A hydrolase family.

It catalyses the reaction P(1),P(4)-bis(5'-adenosyl) tetraphosphate + H2O = 2 ADP + 2 H(+). Its function is as follows. Hydrolyzes diadenosine 5',5'''-P1,P4-tetraphosphate to yield ADP. The polypeptide is Bis(5'-nucleosyl)-tetraphosphatase, symmetrical (Shewanella baltica (strain OS185)).